An 830-amino-acid chain; its full sequence is Leucine--tRNA ligase (830 aa).

The 'HIGH' region motif lies at 48–58; sequence PYPSGAIHMGH. The short motif at 596–600 is the 'KMSKS' region element; sequence KMSKS. Position 599 (lysine 599) interacts with ATP.

The protein belongs to the class-I aminoacyl-tRNA synthetase family.

Its subcellular location is the cytoplasm. It catalyses the reaction tRNA(Leu) + L-leucine + ATP = L-leucyl-tRNA(Leu) + AMP + diphosphate. The polypeptide is Leucine--tRNA ligase (Helicobacter hepaticus (strain ATCC 51449 / 3B1)).